The sequence spans 173 residues: Alpha-crystallin A chain (173 aa).

Methionine 1 bears the N-acetylmethionine mark. Positions 1–63 (MDIAIQHPWF…RTVLDSGISE (63 aa)) are required for complex formation with BFSP1 and BFSP2. Glutamine 6 is subject to Deamidated glutamine; partial. Residue serine 45 is modified to Phosphoserine. Glutamine 50 carries the post-translational modification Deamidated glutamine; partial. In terms of domain architecture, sHSP spans 52–162 (LFRTVLDSGI…GHSERAIPVS (111 aa)). N6-acetyllysine is present on lysine 70. The residue at position 90 (glutamine 90) is a Deamidated glutamine; partial. An N6-acetyllysine modification is found at lysine 99. Zn(2+) is bound at residue histidine 100. Asparagine 101 is subject to Deamidated asparagine; partial. Residues glutamate 102 and histidine 107 each coordinate Zn(2+). Serine 122 is subject to Phosphoserine. At asparagine 123 the chain carries Deamidated asparagine; partial. Residues 144–173 (PKIPSGMDAGHSERAIPVSREEKPGSAPSS) are disordered. Positions 153–167 (GHSERAIPVSREEKP) are enriched in basic and acidic residues. A Zn(2+)-binding site is contributed by histidine 154. A glycan (O-linked (GlcNAc) serine) is linked at serine 162.

It belongs to the small heat shock protein (HSP20) family. Heteromer composed of three CRYAA and one CRYAB subunits. Inter-subunit bridging via zinc ions enhances stability, which is crucial as there is no protein turn over in the lens. Can also form homodimers and homotetramers (dimers of dimers) which serve as the building blocks of homooligomers. Within homooligomers, the zinc-binding motif is created from residues of 3 different molecules. His-100 and Glu-102 from one molecule are ligands of the zinc ion, and His-107 and His-154 residues from additional molecules complete the site with tetrahedral coordination geometry. Part of a complex required for lens intermediate filament formation composed of BFSP1, BFSP2 and CRYAA. Post-translationally, acetylation at Lys-70 may increase chaperone activity. Undergoes age-dependent proteolytical cleavage at the C-terminus.

Its subcellular location is the cytoplasm. It is found in the nucleus. In terms of biological role, contributes to the transparency and refractive index of the lens. Acts as a chaperone, preventing aggregation of various proteins under a wide range of stress conditions. Required for the correct formation of lens intermediate filaments as part of a complex composed of BFSP1, BFSP2 and CRYAA. The sequence is that of Alpha-crystallin A chain (CRYAA) from Equus caballus (Horse).